Reading from the N-terminus, the 212-residue chain is MIGVIDYGMGNLYSVSKALERIDAPYFVSEHPDELKRADSYILPGVGAFRDAMEILTENGLKTFIQAAANEGKPLLGICLGMQLLFEESEEHGASEGLGLLKGKVVKLKDCDQAGNRLKVPHMGWNLLKVHRDSPLLPKAKEGFAYFVHSYYVSGIEEEALLASAEYGVCVPAVVGLGNVYGAQFHPEKSSTVGMLILERFKQFTQEQKVKK.

One can recognise a Glutamine amidotransferase type-1 domain in the interval 1 to 211 (MIGVIDYGMG…KQFTQEQKVK (211 aa)). The Nucleophile role is filled by Cys-79. Catalysis depends on residues His-186 and Glu-188.

Heterodimer of HisH and HisF.

The protein localises to the cytoplasm. The catalysed reaction is 5-[(5-phospho-1-deoxy-D-ribulos-1-ylimino)methylamino]-1-(5-phospho-beta-D-ribosyl)imidazole-4-carboxamide + L-glutamine = D-erythro-1-(imidazol-4-yl)glycerol 3-phosphate + 5-amino-1-(5-phospho-beta-D-ribosyl)imidazole-4-carboxamide + L-glutamate + H(+). It catalyses the reaction L-glutamine + H2O = L-glutamate + NH4(+). It functions in the pathway amino-acid biosynthesis; L-histidine biosynthesis; L-histidine from 5-phospho-alpha-D-ribose 1-diphosphate: step 5/9. Its function is as follows. IGPS catalyzes the conversion of PRFAR and glutamine to IGP, AICAR and glutamate. The HisH subunit catalyzes the hydrolysis of glutamine to glutamate and ammonia as part of the synthesis of IGP and AICAR. The resulting ammonia molecule is channeled to the active site of HisF. In Bacillus licheniformis (strain ATCC 14580 / DSM 13 / JCM 2505 / CCUG 7422 / NBRC 12200 / NCIMB 9375 / NCTC 10341 / NRRL NRS-1264 / Gibson 46), this protein is Imidazole glycerol phosphate synthase subunit HisH.